A 313-amino-acid polypeptide reads, in one-letter code: Olfactory receptor 56A4 (313 aa).

The Extracellular portion of the chain corresponds to 1–28; that stretch reads MASPSNDSTAPVSEFLLICFPNFQSWQH. N-linked (GlcNAc...) asparagine glycosylation occurs at Asn-6. The chain crosses the membrane as a helical span at residues 29-49; that stretch reads WLSLPLSLLFLLAMGANTTLL. Over 50 to 57 the chain is Cytoplasmic; that stretch reads ITIQLEAS. Residues 58-78 traverse the membrane as a helical segment; sequence LHQPLYYLLSLLSLLDIVLCL. The Extracellular portion of the chain corresponds to 79 to 102; the sequence is TVIPKVLAIFWFDLRSISFPACFL. Residues Cys-100 and Cys-192 are joined by a disulfide bond. Residues 103–123 form a helical membrane-spanning segment; that stretch reads QMFIMNSFLTMESCTFMVMAY. The Cytoplasmic segment spans residues 124–142; that stretch reads DRYVAICHPLRYPSIITDQ. A helical transmembrane segment spans residues 143–163; sequence FVARAVVFVIARNAFVSLPVP. Residues 164-199 are Extracellular-facing; that stretch reads MLSARLRYCAGNIIKNCICSNLSVSKLSCDDITFNQ. The N-linked (GlcNAc...) asparagine glycan is linked to Asn-184. A helical membrane pass occupies residues 200–220; it reads LYQFVAGWTLLGSDLILIVIS. Over 221-240 the chain is Cytoplasmic; sequence YSFILKVVLRIKAEGAVAKA. Residues 241 to 261 form a helical membrane-spanning segment; it reads LSTCGSHFILILFFSTVLLVL. The Extracellular segment spans residues 262–276; it reads VITNLARKRIPPDVP. A helical membrane pass occupies residues 277–297; the sequence is ILLNILHHLIPPALNPIVYGV. At 298 to 313 the chain is on the cytoplasmic side; it reads RTKEIKQGIQNLLKRL.

It belongs to the G-protein coupled receptor 1 family.

The protein resides in the cell membrane. Functionally, odorant receptor. The protein is Olfactory receptor 56A4 (OR56A4) of Homo sapiens (Human).